Consider the following 244-residue polypeptide: Dihydropteridine reductase (244 aa).

Position 2 is an N-acetylalanine (alanine 2). NADP(+) is bound at residue 14 to 38 (LVYGGRGALGSRCVQAFRARNWWVA). Residues lysine 73, lysine 79, lysine 96, and lysine 102 each carry the N6-succinyllysine modification. Residue tyrosine 150 is the Proton acceptor of the active site.

The protein belongs to the short-chain dehydrogenases/reductases (SDR) family. Homodimer.

It catalyses the reaction 5,6,7,8-tetrahydropteridine + NAD(+) = 6,7-dihydropteridine + NADH + H(+). The enzyme catalyses 5,6,7,8-tetrahydropteridine + NADP(+) = 6,7-dihydropteridine + NADPH + H(+). Its function is as follows. Catalyzes the conversion of quinonoid dihydrobiopterin into tetrahydrobiopterin. The chain is Dihydropteridine reductase (QDPR) from Homo sapiens (Human).